The following is a 1329-amino-acid chain: Synergin gamma (1329 aa).

Residues 112 to 152 (MQKQFAEEQQKRFEQQQKLLEEERKRRQFEEQKQKLRLLSS) are a coiled coil. The segment at 175-211 (GFSRDAKMHPTPASHPKKPDCPTSSHSTKTVSPSSAF) is disordered. Residues 197 to 209 (TSSHSTKTVSPSS) show a composition bias toward low complexity. The 112-residue stretch at 393–504 (NESLVPDAYK…TPVSQPTAMT (112 aa)) folds into the EH domain. The short motif at 555–559 (DFQDF) is the DFXDF motif 1 element. The residue at position 571 (S571) is a Phosphoserine. Residues 578–594 (VPASSKTSNSQHGNSAP) are compositionally biased toward polar residues. The interval 578–600 (VPASSKTSNSQHGNSAPSLLIPL) is disordered. N6-acetyllysine is present on K609. Residues 614 to 878 (KGISAEKPSE…ADFHSSKFSS (265 aa)) form an interaction with AP1G1 region. Disordered regions lie at residues 661–701 (GTDD…TQTQ) and 730–753 (AFST…PASL). S676 is subject to Phosphoserine. Positions 761–773 (LADDFGEFNLFGE) are interaction with AP1G1, AP1G2 and GGA1. A DFXDF motif 2 motif is present at residues 785–789 (DFADF). The interval 797–835 (IPSEPKADDKYEALREEGSPGALSTSTVEGAHNPPVSSS) is disordered. A compositionally biased stretch (basic and acidic residues) spans 801–814 (PKADDKYEALREEG). S815 carries the phosphoserine modification. The residue at position 836 (K836) is an N6-acetyllysine. Residues S844 and S864 each carry the phosphoserine modification. 3 disordered regions span residues 856–922 (KENT…DSED), 941–1042 (HVMS…FGEF), and 1088–1113 (SLSL…RDRS). Positions 864 to 873 (SDGDFADFHS) are enriched in basic and acidic residues. The DFXDF motif 3 signature appears at 867–871 (DFADF). Residues 874-883 (SKFSSTSSDK) show a composition bias toward low complexity. Phosphoserine occurs at positions 904, 944, 947, 997, 1021, 1088, 1090, 1102, and 1113. The span at 944-955 (SDSSLDLPTVSG) shows a compositional bias: polar residues. The span at 1016–1028 (ENTCPSPASSVAS) shows a compositional bias: polar residues. T1115 carries the phosphothreonine modification.

Self-associates. Interacts with GGA1 (via GAE domain). Interacts with GGA2 and GGA3. Interacts with AP1G1 (via GAE domain), a subunit of adapter protein complex AP-1. Interacts with AP1G2 (via GAE domain) a subunit of adapter protein complex AP-1. Component of the aftiphilin/p200/gamma-synergin complex, at least composed of AFTPH/aftiphilin, HEATR5B/p200a and SYNRG/gamma-synergin, which plays a role in the AP1G1/AP-1-mediated trafficking of transferrin from early to recycling endosomes. Within the complex interacts with AFTPH/aftiphilin and HEATR5B/p200a; the interactions are direct. Interacts (via EH domain) with SCAMP1. In terms of tissue distribution, detected in brain and liver (at protein level). Ubiquitously expressed.

It localises to the cytoplasm. The protein localises to the golgi apparatus. Its subcellular location is the trans-Golgi network membrane. It is found in the perinuclear region. The protein resides in the cytoplasmic vesicle. It localises to the clathrin-coated vesicle. Plays a role in endocytosis and/or membrane trafficking at the trans-Golgi network (TGN). May act by linking the adapter protein complex AP-1 to other proteins. Component of clathrin-coated vesicles. Component of the aftiphilin/p200/gamma-synergin complex, which plays roles in AP1G1/AP-1-mediated protein trafficking including the trafficking of transferrin from early to recycling endosomes, and the membrane trafficking of furin and the lysosomal enzyme cathepsin D between the trans-Golgi network (TGN) and endosomes. The protein is Synergin gamma (Synrg) of Rattus norvegicus (Rat).